A 323-amino-acid chain; its full sequence is MISLLRLCSFLAAGSILVQGSPIIAPSAPTWDTPNNFTSPSNFTSKPGNEASPFWLIGHRVLTKGGVRAALGHGANALEVDITGWWNGWYGDHDGLPSSAGDKVADLFDEIAYRRRQGAQVSFVWLDLKNPDFNKNGVNIVSLMTLCREKLEPAGVRVLFGFYSSQTSGHAFRFVKQVLNENEAIGIDGSFEPVEKDFEKNGIRVEKRVFSSGLFNPDFNFGTCQDRASGVCTQLREGKESHKFGKVFGWTVSSYTRKDHVYKMMEVGVDGLIYGFVASHYYNHKDIRQTIRTIRGWLDEHRDTHRLATNDDNPWSMSSRKSS.

A signal peptide spans 1-20 (MISLLRLCSFLAAGSILVQG). Residue His59 is part of the active site. Mg(2+) is bound by residues Glu79, Asp81, and Asp127. The short motif at 308 to 315 (ATNDDNPW) is the SMD-tail element.

Belongs to the sphingomyelinase D/phospholipase D family. Mg(2+) is required as a cofactor.

It localises to the secreted. The enzyme catalyses a sphingomyelin + H2O = an N-acylsphing-4-enine 1-phosphate + choline + H(+). Catalyzes the hydrolysis of sphingomyelin. Sphingomyelinases D are produced by some spider in their venoms, but also by arthropods such as ticks, or pathogenic bacteria and fungi. They might play a role in pathogenicity through different mechanisms, such as membrane destabilization and host cell penetration, but also pulmonary inflammation and cutaneous lesions. The sequence is that of Sphingomyelinase D from Trichophyton rubrum (strain ATCC MYA-4607 / CBS 118892) (Athlete's foot fungus).